The following is a 191-amino-acid chain: Calcium-activated potassium channel subunit beta-1 (191 aa).

The Cytoplasmic portion of the chain corresponds to 1 to 15 (MGKKLVMAQKRGETR). The chain crosses the membrane as a helical span at residues 16-36 (ALCLGVAMVMCAVITYYILGT). The Extracellular segment spans residues 37-157 (TMLPLYQKSV…YQRLYGPQAL (121 aa)). Asparagine 80 and asparagine 142 each carry an N-linked (GlcNAc...) asparagine glycan. A helical transmembrane segment spans residues 158 to 178 (LASLFWPTFLLTGGLLIIAMV). Residues 179–191 (KINRSLSILAAQK) lie on the Cytoplasmic side of the membrane.

Belongs to the KCNMB (TC 8.A.14.1) family. KCNMB1 subfamily. In terms of assembly, interacts with KCNMA1 tetramer. There are probably 4 molecules of KCMNB1 per KCNMA1 tetramer. N-glycosylated.

It localises to the membrane. In terms of biological role, regulatory subunit of the calcium activated potassium KCNMA1 (maxiK) channel. Modulates the calcium sensitivity and gating kinetics of KCNMA1, thereby contributing to KCNMA1 channel diversity. Increases the apparent Ca(2+)/voltage sensitivity of the KCNMA1 channel. It also modifies KCNMA1 channel kinetics and alters its pharmacological properties. It slows down the activation and the deactivation kinetics of the channel. Acts as a negative regulator of smooth muscle contraction by enhancing the calcium sensitivity to KCNMA1. Its presence is also a requirement for internal binding of the KCNMA1 channel opener dehydrosoyasaponin I (DHS-1) triterpene glycoside and for external binding of the agonist hormone 17-beta-estradiol (E2). Increases the binding activity of charybdotoxin (CTX) toxin to KCNMA1 peptide blocker by increasing the CTX association rate and decreasing the dissociation rate. This is Calcium-activated potassium channel subunit beta-1 (KCNMB1) from Oryctolagus cuniculus (Rabbit).